Here is a 359-residue protein sequence, read N- to C-terminus: Membrane-bound lytic murein transglycosylase C (359 aa).

Positions Met1–Ser16 are cleaved as a signal peptide. The N-palmitoyl cysteine moiety is linked to residue Cys17. Residue Cys17 is the site of S-diacylglycerol cysteine attachment.

This sequence belongs to the transglycosylase Slt family.

The protein localises to the cell outer membrane. It carries out the reaction Exolytic cleavage of the (1-&gt;4)-beta-glycosidic linkage between N-acetylmuramic acid (MurNAc) and N-acetylglucosamine (GlcNAc) residues in peptidoglycan, from either the reducing or the non-reducing ends of the peptidoglycan chains, with concomitant formation of a 1,6-anhydrobond in the MurNAc residue.. In terms of biological role, murein-degrading enzyme. May play a role in recycling of muropeptides during cell elongation and/or cell division. The chain is Membrane-bound lytic murein transglycosylase C from Edwardsiella ictaluri (strain 93-146).